The sequence spans 223 residues: MTADGGPDVRHGTRPEPSGDGRVVVLSGPSAVGKSTVVRCLRERVPNLHFSVSATTRAPRPGEVDGVDYHFVSPARFQQLIDEGALLEWAEIHSGLHRSGTLAAPVRAAVARGCPVLIEVDLAGARAVKKAMPEALTVFLAPPSWEDLEARLIGRGTETPEVIARRLQTARVEMAAQHDFDRVVVNSRLESACAELVSLLVGTAPDRHDTSGRTGRQTTSHPD.

Positions M1–R22 are disordered. Positions P7 to G19 are enriched in basic and acidic residues. A Guanylate kinase-like domain is found at G21 to V201. Position 28–35 (G28–S35) interacts with ATP. A disordered region spans residues A204–D223. Residues G212–D223 are compositionally biased toward polar residues.

The protein belongs to the guanylate kinase family.

It localises to the cytoplasm. It catalyses the reaction GMP + ATP = GDP + ADP. In terms of biological role, essential for recycling GMP and indirectly, cGMP. The chain is Guanylate kinase from Mycolicibacterium paratuberculosis (strain ATCC BAA-968 / K-10) (Mycobacterium paratuberculosis).